A 98-amino-acid polypeptide reads, in one-letter code: Gas vesicle protein A (98 aa).

Belongs to the gas vesicle GvpA family. As to quaternary structure, the gas vesicle shell is 2 nm thick and consists of a single layer of this protein. It forms helical ribs nearly perpendicular to the long axis of the vesicle.

The protein localises to the gas vesicle shell. In terms of biological role, gas vesicles are hollow, gas filled proteinaceous nanostructures found in some microorganisms. During planktonic growth they allow positioning of the organism at a favorable depth for light or nutrient acquisition. GvpA forms the protein shell. This chain is Gas vesicle protein A, found in Koribacter versatilis (strain Ellin345).